We begin with the raw amino-acid sequence, 575 residues long: V-type ATP synthase alpha chain (575 aa).

238-245 (GPFGAGKT) is a binding site for ATP.

It belongs to the ATPase alpha/beta chains family.

The catalysed reaction is ATP + H2O + 4 H(+)(in) = ADP + phosphate + 5 H(+)(out). Functionally, produces ATP from ADP in the presence of a proton gradient across the membrane. The V-type alpha chain is a catalytic subunit. The sequence is that of V-type ATP synthase alpha chain from Borrelia garinii subsp. bavariensis (strain ATCC BAA-2496 / DSM 23469 / PBi) (Borreliella bavariensis).